We begin with the raw amino-acid sequence, 766 residues long: Serine/threonine-protein kinase tousled-like 1 (766 aa).

The tract at residues 1–198 (MSVQSSSGSL…PSPTALAFGD (198 aa)) is disordered. Over residues 20-33 (STSPTPGSAAAARS) the composition is skewed to low complexity. T38 bears the Phosphothreonine mark. Residues 43-64 (RPREGAMDELHSLDPRRQELLE) show a composition bias toward basic and acidic residues. Phosphoserine is present on residues S54, S77, and S80. A compositionally biased stretch (low complexity) spans 68–85 (TGVATGSTGSTGSCSVGA). Residues 87–103 (ASTNNESSNHSFGSLGS) show a composition bias toward polar residues. Positions 105–121 (SDKESETPEKKQSESSR) are enriched in basic and acidic residues. Residues S134, S159, S174, and S176 each carry the phosphoserine modification. Over residues 170–192 (SPQNSHSHSTPSSSVRPNSPSPT) the composition is skewed to low complexity. The stretch at 229 to 280 (NQDLEKKEGRIDDLLRANCDLRRQIDDQQKLLEKYKERLNKCISMSKKLLIE) forms a coiled coil. The tract at residues 344–381 (KLLGKRKPPTANNSQAPATNSEAKQRKTKAVNGAENDP) is disordered. Over residues 353 to 365 (TANNSQAPATNSE) the composition is skewed to polar residues. A coiled-coil region spans residues 397-445 (HEQEEIFKLRLGHLKKEEAEIQAELERLERVRNLHIRELKRINNEDNSQ). Positions 456-734 (YLLLHLLGRG…VHQLANDPYL (279 aa)) constitute a Protein kinase domain. ATP-binding positions include 462–470 (LGRGGFSEV) and K485. D586 functions as the Proton acceptor in the catalytic mechanism. Residue S743 is modified to Phosphoserine. The disordered stretch occupies residues 745–766 (GNLHMSGLTATPTPPSSSIITY).

This sequence belongs to the protein kinase superfamily. Ser/Thr protein kinase family. Heterodimer with TLK2. Mg(2+) is required as a cofactor. Ubiquitously expressed in all tissues examined.

It localises to the nucleus. It catalyses the reaction L-seryl-[protein] + ATP = O-phospho-L-seryl-[protein] + ADP + H(+). It carries out the reaction L-threonyl-[protein] + ATP = O-phospho-L-threonyl-[protein] + ADP + H(+). Its activity is regulated as follows. Cell-cycle regulated, maximal activity in S-phase. Inactivated by phosphorylation at Ser-743, potentially by CHEK1. Functionally, rapidly and transiently inhibited by phosphorylation following the generation of DNA double-stranded breaks during S-phase. This is cell cycle checkpoint and ATM-pathway dependent and appears to regulate processes involved in chromatin assembly. Isoform 3 protects the cells from the ionizing radiation by facilitating the repair of DSBs. In vitro, phosphorylates histone H3 at 'Ser-10'. The polypeptide is Serine/threonine-protein kinase tousled-like 1 (Tlk1) (Mus musculus (Mouse)).